Here is a 625-residue protein sequence, read N- to C-terminus: Chaperone protein HtpG (625 aa).

Residues 1-337 (MNIQKKEVYS…SNNLPLNVSR (337 aa)) form an a; substrate-binding region. The b stretch occupies residues 338 to 552 (EILQDNSITQ…SNEMSTQMAK (215 aa)). Residues 553-625 (LFSAAGQSVP…ARTNKLILEQ (73 aa)) are c.

The protein belongs to the heat shock protein 90 family. Homodimer.

It localises to the cytoplasm. In terms of biological role, molecular chaperone. Has ATPase activity. In Buchnera aphidicola subsp. Schizaphis graminum (strain Sg), this protein is Chaperone protein HtpG.